The chain runs to 546 residues: T-complex protein 1 subunit epsilon (546 aa).

The protein belongs to the TCP-1 chaperonin family. Heterooligomeric complex of about 850 to 900 kDa that forms two stacked rings, 12 to 16 nm in diameter.

The protein resides in the cytoplasm. Functionally, molecular chaperone; assists the folding of proteins upon ATP hydrolysis. Known to play a role, in vitro, in the folding of actin and tubulin. The protein is T-complex protein 1 subunit epsilon (cct5) of Schizosaccharomyces pombe (strain 972 / ATCC 24843) (Fission yeast).